A 311-amino-acid chain; its full sequence is Cathepsin B (311 aa).

Residues 1-19 form the signal peptide; sequence MRVLLSLVVILFIINSAFA. Residues 20-78 constitute a propeptide that is removed on maturation; sequence VKINIGRPTKSHKTIHHETWVEEQTDQFDNIKVGQLLGFKRSPNRPKLQIKSYDPLGVQ. N-linked (GlcNAc...) asparagine glycosylation is present at Asn91. Cystine bridges form between Cys92/Cys121, Cys104/Cys145, Cys138/Cys191, Cys167/Cys195, and Cys175/Cys182. Cys107 is an active-site residue. Asn198 is a glycosylation site (N-linked (GlcNAc...) asparagine). Residues His261 and Asn281 contribute to the active site. N-linked (GlcNAc...) asparagine glycosylation is present at Asn290.

This sequence belongs to the peptidase C1 family.

It is found in the lysosome. It catalyses the reaction Hydrolysis of proteins with broad specificity for peptide bonds. Preferentially cleaves -Arg-Arg-|-Xaa bonds in small molecule substrates (thus differing from cathepsin L). In addition to being an endopeptidase, shows peptidyl-dipeptidase activity, liberating C-terminal dipeptides.. Thiol protease which is believed to participate in intracellular degradation and turnover of proteins. This Dictyostelium discoideum (Social amoeba) protein is Cathepsin B (ctsB).